The following is a 222-amino-acid chain: UPF0688 protein C1orf174 homolog (222 aa).

2 disordered regions span residues 23–57 and 98–158; these read STSLASAGDIASSTSAKTTCLASSSHKATDRRTSK and EDGA…EPVP. Residues 33 to 48 show a composition bias toward polar residues; sequence ASSTSAKTTCLASSSH. A compositionally biased stretch (basic and acidic residues) spans 121–131; it reads VSEEPSVKAEE. Ser172 carries the phosphoserine modification.

It belongs to the UPF0688 family.

It is found in the nucleus. This Rattus norvegicus (Rat) protein is UPF0688 protein C1orf174 homolog.